The following is a 734-amino-acid chain: MGGPHGGPFLLFHVLCFLLTLSEVGSQNSKACALPCPPNSSCVNGTACRCAPGFISFSGEIFTDPLESCDDINECGPPSPVDCGSSADCQNTEGGYYCTCSPGYEPVSGAMIFRNESENTCRDVDECSSGQHQCHNSTVCFNTVGSYTCHCREGWEPKHGLKNKQKDTICKEISFPAWTAPPGIKSRSLSAFFERVQKMSRDFKPAMAKKSMQDLVGSVDDLLKNSGDLESLDQSSKHVTVTHLLSGLEQILRTLAKAMPKGSFTYRSLDNTELSLVVQEQGKGNVTVGQSHARMLLDWAVAAAAEESGPTVVGILSSQNMKKLLANASLKLDSEKLKETYKSPVRGAKVTLLSAVSSVFLSNTNTEKLDSNVSFAFALHEQPELKPRQELICAFWKKDSNGNGSWATTGCWKMGRGNGSITCQCSHLSSFAILMAHYDVEDPKLALITKVGLALSLACLLLCILTFLLVRPIQGSRTTVHLHLCICLFVGSAIFLAGIENEGGEVGTRCRLVAVLLHYCFLAAFCWMSLEGVELYFLVVRVFQGQGMRKLWLCLIGYGVPLIIVGISAGAYSKGYGREKFCWLNFEGGFLWSFVGPVTFIVLGNAIIFVITVWKLTQKFSEINPDIKKLKKARVLTITAIAQLFVLGCTWVFGLLLFNPESWVLSYIFSILNCLQGFFLFVLYCLLNKKVREEYRKWACMVAGNKYSEFATTTSGSGSSHNQTQALRPSESGM.

A signal peptide spans 1–26 (MGGPHGGPFLLFHVLCFLLTLSEVGS). Residues 27 to 449 (QNSKACALPC…VEDPKLALIT (423 aa)) lie on the Extracellular side of the membrane. The EGF-like 1 domain maps to 28-70 (NSKACALPCPPNSSCVNGTACRCAPGFISFSGEIFTDPLESCD). Cystine bridges form between C32-C42, C36-C48, C50-C69, C75-C89, C83-C98, C100-C121, C127-C140, C134-C149, and C151-C170. Residues N39 and N44 are each glycosylated (N-linked (GlcNAc...) asparagine). The EGF-like 2; calcium-binding domain occupies 71–122 (DINECGPPSPVDCGSSADCQNTEGGYYCTCSPGYEPVSGAMIFRNESENTCR). N-linked (GlcNAc...) asparagine glycans are attached at residues N115 and N136. The region spanning 123-171 (DVDECSSGQHQCHNSTVCFNTVGSYTCHCREGWEPKHGLKNKQKDTICK) is the EGF-like 3; calcium-binding domain. Residues 265-441 (TYRSLDNTEL…AILMAHYDVE (177 aa)) enclose the GAIN-B domain. N-linked (GlcNAc...) asparagine glycosylation is found at N285, N327, N372, N403, and N418. Intrachain disulfides connect C393/C423 and C411/C425. The GPS stretch occupies residues 393–441 (CAFWKKDSNGNGSWATTGCWKMGRGNGSITCQCSHLSSFAILMAHYDVE). Residues 450–470 (KVGLALSLACLLLCILTFLLV) form a helical membrane-spanning segment. Topologically, residues 471–478 (RPIQGSRT) are cytoplasmic. The helical transmembrane segment at 479 to 499 (TVHLHLCICLFVGSAIFLAGI) threads the bilayer. The Extracellular segment spans residues 500 to 519 (ENEGGEVGTRCRLVAVLLHY). A helical membrane pass occupies residues 520–540 (CFLAAFCWMSLEGVELYFLVV). Topologically, residues 541–550 (RVFQGQGMRK) are cytoplasmic. The helical transmembrane segment at 551–571 (LWLCLIGYGVPLIIVGISAGA) threads the bilayer. Residues 572-593 (YSKGYGREKFCWLNFEGGFLWS) are Extracellular-facing. A helical membrane pass occupies residues 594 to 614 (FVGPVTFIVLGNAIIFVITVW). Topologically, residues 615–637 (KLTQKFSEINPDIKKLKKARVLT) are cytoplasmic. A helical transmembrane segment spans residues 638–658 (ITAIAQLFVLGCTWVFGLLLF). Residues 659–662 (NPES) lie on the Extracellular side of the membrane. Residues 663 to 683 (WVLSYIFSILNCLQGFFLFVL) form a helical membrane-spanning segment. Topologically, residues 684–734 (YCLLNKKVREEYRKWACMVAGNKYSEFATTTSGSGSSHNQTQALRPSESGM) are cytoplasmic. A disordered region spans residues 712 to 734 (TTTSGSGSSHNQTQALRPSESGM). T713 bears the Phosphothreonine mark. Phosphoserine is present on S715. Position 724 is a phosphothreonine (T724). A phosphoserine mark is found at S730 and S732.

The protein belongs to the G-protein coupled receptor 2 family. LN-TM7 subfamily. As to quaternary structure, forms a heterodimer, consisting of a large extracellular region (alpha subunit) non-covalently linked to a seven-transmembrane moiety (beta subunit). Interacts with complement decay-accelerating factor (DAF) and with chondroitin sulfate. Proteolytically cleaved into 2 subunits, an extracellular alpha subunit and a seven-transmembrane subunit.

It localises to the cell membrane. It is found in the secreted. The protein localises to the extracellular space. Receptor potentially involved in both adhesion and signaling processes early after leukocyte activation. Plays an essential role in leukocyte migration. This Bos taurus (Bovine) protein is Adhesion G protein-coupled receptor E5.